The primary structure comprises 314 residues: Acetyl-coenzyme A carboxylase carboxyl transferase subunit alpha (314 aa).

A CoA carboxyltransferase C-terminal domain is found at 38 to 292 (RLERKSAALL…ANAIDEELDA (255 aa)).

The protein belongs to the AccA family. Acetyl-CoA carboxylase is a heterohexamer composed of biotin carboxyl carrier protein (AccB), biotin carboxylase (AccC) and two subunits each of ACCase subunit alpha (AccA) and ACCase subunit beta (AccD).

The protein localises to the cytoplasm. It catalyses the reaction N(6)-carboxybiotinyl-L-lysyl-[protein] + acetyl-CoA = N(6)-biotinyl-L-lysyl-[protein] + malonyl-CoA. It participates in lipid metabolism; malonyl-CoA biosynthesis; malonyl-CoA from acetyl-CoA: step 1/1. In terms of biological role, component of the acetyl coenzyme A carboxylase (ACC) complex. First, biotin carboxylase catalyzes the carboxylation of biotin on its carrier protein (BCCP) and then the CO(2) group is transferred by the carboxyltransferase to acetyl-CoA to form malonyl-CoA. The chain is Acetyl-coenzyme A carboxylase carboxyl transferase subunit alpha from Erythrobacter litoralis (strain HTCC2594).